The sequence spans 205 residues: Probable molybdenum cofactor guanylyltransferase (205 aa).

Residues 9-11 (LAG), Lys-21, Asp-66, and Asp-95 each bind GTP. Position 95 (Asp-95) interacts with Mg(2+).

It belongs to the MobA family. It depends on Mg(2+) as a cofactor.

It localises to the cytoplasm. It catalyses the reaction Mo-molybdopterin + GTP + H(+) = Mo-molybdopterin guanine dinucleotide + diphosphate. Its function is as follows. Transfers a GMP moiety from GTP to Mo-molybdopterin (Mo-MPT) cofactor (Moco or molybdenum cofactor) to form Mo-molybdopterin guanine dinucleotide (Mo-MGD) cofactor. The protein is Probable molybdenum cofactor guanylyltransferase of Pelotomaculum thermopropionicum (strain DSM 13744 / JCM 10971 / SI).